Reading from the N-terminus, the 631-residue chain is Nucleoside triphosphatase I (631 aa).

One can recognise a Helicase ATP-binding domain in the interval 42–204 (FLGLDSMHSL…TMLVNLLRPG (163 aa)). 55-62 (HETGVGKT) provides a ligand contact to ATP. The DEXH box signature appears at 141-144 (DECH). In terms of domain architecture, Helicase C-terminal spans 367–532 (KFIDVCLGIL…EFVQLFRVFK (166 aa)). Residues 457-524 (DIFILDMTWN…EIIQSKSKEF (68 aa)) are binding to the cap-specific mRNA (nucleoside-2'-O-)-methyltransferase.

This sequence belongs to the helicase family. NPH I subfamily. Monomer. Interacts (via C-terminus) with RAP94/OPG109 (via N-terminus). Interacts with the cap-specific mRNA (nucleoside-2'-O-)-methyltransferase OPG102.

The protein localises to the virion. It catalyses the reaction a ribonucleoside 5'-triphosphate + H2O = a ribonucleoside 5'-diphosphate + phosphate + H(+). Functionally, DNA-dependent ATPase that acts as a 5' to 3' translocase on single-stranded DNA and thereby plays a role in transcription termination of viral early genes. Uses forward translocation in concert with the viral RNA polymerase RAP94/OPG109 subunit and the capping enzyme/VTF to catalyze release of UUUUUNU-containing nascent RNA from the elongation complex. In addition, acts as a positive elongation factor to assist transcription through problematic sequences. In Vaccinia virus (strain Copenhagen) (VACV), this protein is Nucleoside triphosphatase I (OPG123).